The chain runs to 159 residues: Transcription elongation factor GreA (159 aa).

A coiled-coil region spans residues 2-77; that stretch reads EENKEFLLTQ…LENMVRKAVI (76 aa).

This sequence belongs to the GreA/GreB family.

Necessary for efficient RNA polymerase transcription elongation past template-encoded arresting sites. The arresting sites in DNA have the property of trapping a certain fraction of elongating RNA polymerases that pass through, resulting in locked ternary complexes. Cleavage of the nascent transcript by cleavage factors such as GreA or GreB allows the resumption of elongation from the new 3'terminus. GreA releases sequences of 2 to 3 nucleotides. The sequence is that of Transcription elongation factor GreA from Clostridioides difficile (strain 630) (Peptoclostridium difficile).